The primary structure comprises 304 residues: Bacteriochlorophyll synthase 33 kDa chain (304 aa).

The next 9 membrane-spanning stretches (helical) occupy residues 26 to 46 (VTWFPPMWAYLCGAVSSNVPI), 51 to 71 (GVVVLGIVLAGPIVCGMSQAA), 94 to 114 (IPGLWGLYIAIAMSLLSLVVG), 117 to 137 (LGSWGFVATLLGVAAAWAYSV), 151 to 171 (GLVGLAYEGLPWITGAAVLLA), 178 to 198 (GFPIVMMATLYALGAHGIMTI), 227 to 247 (IACTVMGLAQALVITMLYLFS), 250 to 270 (YHATAVLVLLCGQFWAMSVWM), and 279 to 299 (WYNGTGVVMYVSGMMITAFAI).

The protein resides in the cell membrane. Its pathway is porphyrin-containing compound metabolism; bacteriochlorophyll biosynthesis (light-independent). Functionally, catalyzes the esterification of bacteriochlorophyllide a by geranylgeraniol-PPi. The chain is Bacteriochlorophyll synthase 33 kDa chain (bchG) from Rhodobacter capsulatus (strain ATCC BAA-309 / NBRC 16581 / SB1003).